We begin with the raw amino-acid sequence, 152 residues long: Transcriptional repressor NrdR (152 aa).

A zinc finger lies at 3 to 34; the sequence is CPFCNHGELKVIDSRNSPEANAIKRRRECLRC. The ATP-cone domain maps to 48-138; that stretch reads IQVLKRDGRY…VYRRFRDVGE (91 aa).

Belongs to the NrdR family. Requires Zn(2+) as cofactor.

Its function is as follows. Negatively regulates transcription of bacterial ribonucleotide reductase nrd genes and operons by binding to NrdR-boxes. The sequence is that of Transcriptional repressor NrdR from Chlamydia muridarum (strain MoPn / Nigg).